We begin with the raw amino-acid sequence, 1063 residues long: MASTTPITMEDLQKALEAQSRALRAELAAGASQSRRPRPPRQRDSSTSGDDSGRDSGGPRRRRGNRGRGQLRDWSRAPPPPEERQESRSQTPAPKPSRAPPQQPQPPRMQTGRGGSAPRPELGPPTNPFQAAVARGLRPPLHDPDTEAPTEACVTSWLWSEGEGAVFYRVDLHFTNLGTPPLDEDGRWDPALMYNPCGPEPPAHVVRAYNQPAGDVRGVWGKGERTYAEQDFRVGGTRWHRLLRMPVRGLDGDSAPLPPHTTERIETRSARHPWRIRFGAPQAFLAGLLLAAVAVGTARAGLQPRADMAAPPTLPQPPRAHGQHYGHHHHQLPFLGHDGHHGGTLRVGQHHRNASDVLPGHWLQGGWGCYNLSDWHQGTHVCHTKHMDFWCVEHDRPPPATPTPFTTAANSTTAATPATAPAPCHAGLNDSCGGFLSGCGPMRLRHGADTRCGRLICGLSTTAQYPPTRFGCAMRWGLPPWELVVLTARPEDGWTCRGVPAHPGTRCPELVSPMGRATCSPASALWLATANALSLDHALAAFVLLVPWVLIFMVCRRACRRRGAAAALTAVVLQGYNPPAYGEEAFTYLCTAPGCATQTPVPVRLAGVRFESKIVDGGCFAPWDLEATGACICEIPTDVSCEGLGAWVPTAPCARIWNGTQRACTFWAVNAYSSGGYAQLASYFNPGGSYYKQYHPTACEVEPAFGHSDAACWGFPTDTVMSVFALASYVQHPHKTVRVKFHTETRTVWQLSVAGASCNVTTEHPFCNTPHGQLEVQVPPDPGDLVEYIMNYTGNQQSRWGLGSPNCHGPDWASPVCQRHSPDCSRLVGATPERPRLRLVDADDPLLRTAPGPGEVWVTPVIGSQARKCGLHIRAGPYGHATVEMPEWIRAHTTSDPWHPPGPLGLKFKTVRPVALPRALAPPRNVRVTGCYQCGTPALVEGLAPGGGNCHLTLNGEDVGAFPPGKFVTAALLNTPPPYQVSCGGESDRASARVIDPAAQSFTGVVYGTHTTAVSETRQTWAEWAAAHWWQLTLGAICALLLAGLLACCAKCLYYLRGAIAPR.

A disordered region spans residues 1 to 131; it reads MASTTPITME…LGPPTNPFQA (131 aa). The human C1QBP/SF2P32-binding stretch occupies residues 30 to 69; that stretch reads GASQSRRPRPPRQRDSSTSGDDSGRDSGGPRRRRGNRGRG. Phosphoserine; by host is present on S46. The span at 70 to 87 shows a compositional bias: basic and acidic residues; it reads QLRDWSRAPPPPEERQES. Residues 93 to 107 show a composition bias toward pro residues; that stretch reads APKPSRAPPQQPQPP. C153 and C197 form a disulfide bridge. The tract at residues 279 to 300 is functions as E2 signal peptide; sequence GAPQAFLAGLLLAAVAVGTARA. Residues 301–534 are Extracellular-facing; sequence GLQPRADMAA…LWLATANALS (234 aa). N-linked (GlcNAc...) asparagine; by host glycans are attached at residues N353, N371, N410, and N429. The helical transmembrane segment at 535–555 threads the bilayer; the sequence is LDHALAAFVLLVPWVLIFMVC. Residues 556 to 582 are Cytoplasmic-facing; it reads RRACRRRGAAAALTAVVLQGYNPPAYG. The segment at 563–582 is functions as E1 signal peptide; it reads GAAAALTAVVLQGYNPPAYG. Residues 583-1028 are Extracellular-facing; sequence EEAFTYLCTA…QTWAEWAAAH (446 aa). Disulfide bonds link C590–C595, C619–C824, C641–C653, C699–C712, C758–C767, C807–C817, C931–C934, and C950–C983. N-linked (GlcNAc...) asparagine; by host glycosylation occurs at N658. Ca(2+) is bound by residues N670 and A671. Residues D718 and T719 each coordinate Ca(2+). Residues N759 and N791 are each glycosylated (N-linked (GlcNAc...) asparagine; by host). O-linked (GalNAc...) threonine; by host glycosylation is found at T1011 and T1012. The helical transmembrane segment at 1029–1049 threads the bilayer; it reads WWQLTLGAICALLLAGLLACC. The Extracellular segment spans residues 1050–1063; it reads AKCLYYLRGAIAPR.

As to quaternary structure, homodimer; further assembles into homooligomer. Interacts with human C1QBP. Interacts (via N-terminus) with protease/methyltransferase p150. Heterodimer with spike glycoprotein E2. In terms of assembly, heterodimer with spike glycoprotein E1. In terms of processing, structural polyprotein: Specific enzymatic cleavages in vivo yield mature proteins. Two signal peptidase-mediated cleavages within the polyprotein produce the structural proteins capsid, E2, and E1. The E2 signal peptide remains attached to the C-terminus of the capsid protein after cleavage by the signal peptidase. Another signal peptide at E2 C-terminus directs E1 to the ER, with a similar mechanism. Post-translationally, contains three N-linked oligosaccharides. Capsid is phosphorylated on Ser-46 by host. This phosphorylation negatively regulates capsid protein RNA-binding activity. Dephosphorylated by human PP1A.

It is found in the virion. Its subcellular location is the host cytoplasm. It localises to the host mitochondrion. The protein localises to the virion membrane. The protein resides in the host Golgi apparatus membrane. Its function is as follows. Capsid protein interacts with genomic RNA and assembles into icosahedric core particles 65-70 nm in diameter. The resulting nucleocapsid eventually associates with the cytoplasmic domain of E2 at the cell membrane, leading to budding and formation of mature virions from host Golgi membranes. Phosphorylation negatively regulates RNA-binding activity, possibly delaying virion assembly during the viral replication phase. Capsid protein dimerizes and becomes disulfide-linked in the virion. Modulates genomic RNA replication. Modulates subgenomic RNA synthesis by interacting with human C1QBP/SF2P32. Induces both perinuclear clustering of mitochondria and the formation of electron-dense intermitochondrial plaques, both hallmarks of rubella virus infected cells. Induces apoptosis when expressed in transfected cells. In terms of biological role, responsible for viral attachment to target host cell, by binding to the cell receptor. Its transport to the plasma membrane depends on interaction with E1 protein. The surface glycoproteins display an irregular helical organization and a pseudo-tetrameric inner nucleocapsid arrangement. Functionally, class II viral fusion protein. Fusion activity is inactive as long as E1 is bound to E2 in mature virion. After virus attachment to target cell and clathrin-mediated endocytosis, acidification of the endosome would induce dissociation of E1/E2 heterodimer and concomitant trimerization of the E1 subunits. This E1 homotrimer is fusion active, and promotes release of viral nucleocapsid in cytoplasm after endosome and viral membrane fusion. The cytoplasmic tail of spike glycoprotein E1 modulates virus release. The surface glycoproteins display an irregular helical organization and a pseudo-tetrameric inner nucleocapsid arrangement. In Rubella virus (strain TO-336 vaccine) (RUBV), this protein is Structural polyprotein.